A 177-amino-acid polypeptide reads, in one-letter code: Large ribosomal subunit protein uL6 (177 aa).

It belongs to the universal ribosomal protein uL6 family. In terms of assembly, part of the 50S ribosomal subunit.

Functionally, this protein binds to the 23S rRNA, and is important in its secondary structure. It is located near the subunit interface in the base of the L7/L12 stalk, and near the tRNA binding site of the peptidyltransferase center. The chain is Large ribosomal subunit protein uL6 from Dinoroseobacter shibae (strain DSM 16493 / NCIMB 14021 / DFL 12).